The following is a 148-amino-acid chain: uncharacterized protein (148 aa).

The disordered stretch occupies residues 122–148 (HNWRKRMGTRRGRHEQSPTSRPRKGPD). Basic residues predominate over residues 123-134 (NWRKRMGTRRGR).

This is an uncharacterized protein from Homo sapiens (Human).